The sequence spans 208 residues: 3-demethoxyubiquinol 3-hydroxylase (208 aa).

Positions 57, 87, 90, 139, 171, and 174 each coordinate Fe cation.

It belongs to the COQ7 family. It depends on Fe cation as a cofactor.

It localises to the cell membrane. The catalysed reaction is a 5-methoxy-2-methyl-3-(all-trans-polyprenyl)benzene-1,4-diol + AH2 + O2 = a 3-demethylubiquinol + A + H2O. It functions in the pathway cofactor biosynthesis; ubiquinone biosynthesis. In terms of biological role, catalyzes the hydroxylation of 2-nonaprenyl-3-methyl-6-methoxy-1,4-benzoquinol during ubiquinone biosynthesis. The chain is 3-demethoxyubiquinol 3-hydroxylase from Nitrosomonas eutropha (strain DSM 101675 / C91 / Nm57).